The primary structure comprises 92 residues: Small ribosomal subunit protein uS19 (92 aa).

This sequence belongs to the universal ribosomal protein uS19 family.

Protein S19 forms a complex with S13 that binds strongly to the 16S ribosomal RNA. In Bacillus pumilus (strain SAFR-032), this protein is Small ribosomal subunit protein uS19.